The primary structure comprises 231 residues: Killer cell lectin-like receptor subfamily F member 1 (231 aa).

The Cytoplasmic segment spans residues 1-38 (MQDEERYMTLNVQSKKRTSTQTTQLTFKDYSVVLHWYK). Residue Tyr-7 is modified to Phosphotyrosine. Residues 39-59 (ILLGISGTLNGILALALISLI) form a helical; Signal-anchor for type II membrane protein membrane-spanning segment. Over 60 to 231 (LLVSQGVLLK…SSVFKWICQY (172 aa)) the chain is Extracellular. 4 N-linked (GlcNAc...) asparagine glycosylation sites follow: Asn-77, Asn-91, Asn-96, and Asn-176. The C-type lectin domain maps to 121-230 (YRGKCYWFSN…CSSVFKWICQ (110 aa)). 2 disulfide bridges follow: Cys-142–Cys-229 and Cys-208–Cys-221.

Homodimer. Interacts with CLEC2B. Post-translationally, phosphorylated on Tyr-7; this phosphorylation is required for NKp80/KLRF1-mediated cytotoxicity.

Its subcellular location is the membrane. Functions as an activating receptor involved in immunosurveillance upon binding to various ligands displayed at the surface of myeloid cells. Upon interaction with CLEC2B ligand, stimulates NK-cell cytotoxicity and cytokine production leading to the cytolysis of malignant CLEC2B-expressing myeloid cells. Actviation of the common cytotoxicity pathway involves SRC and SYK kinases. This is Killer cell lectin-like receptor subfamily F member 1 (KLRF1) from Macaca fascicularis (Crab-eating macaque).